A 342-amino-acid chain; its full sequence is DNA-directed RNA polymerase subunit alpha (342 aa).

Positions 1–239 (MTTFLAKNWS…DQLQVFINFQ (239 aa)) are alpha N-terminal domain (alpha-NTD). The tract at residues 254–342 (INPVLLKKVY…SLAKKHEDQY (89 aa)) is alpha C-terminal domain (alpha-CTD).

This sequence belongs to the RNA polymerase alpha chain family. In terms of assembly, homodimer. The RNAP catalytic core consists of 2 alpha, 1 beta, 1 beta' and 1 omega subunit. When a sigma factor is associated with the core the holoenzyme is formed, which can initiate transcription.

The catalysed reaction is RNA(n) + a ribonucleoside 5'-triphosphate = RNA(n+1) + diphosphate. Functionally, DNA-dependent RNA polymerase catalyzes the transcription of DNA into RNA using the four ribonucleoside triphosphates as substrates. The protein is DNA-directed RNA polymerase subunit alpha of Orientia tsutsugamushi (strain Ikeda) (Rickettsia tsutsugamushi).